We begin with the raw amino-acid sequence, 396 residues long: Mevalonate kinase (396 aa).

ATP contacts are provided by residues Lys-13, Asn-55, Ser-135, and 140–146 (GAGLGSS). The Proton donor role is filled by Ser-146. Mg(2+) is bound by residues Ser-146 and Glu-193. Residue Asp-204 is the Proton acceptor of the active site.

Belongs to the GHMP kinase family. Mevalonate kinase subfamily. In terms of assembly, homodimer. Mg(2+) is required as a cofactor.

It is found in the cytoplasm. The protein resides in the peroxisome. The catalysed reaction is (R)-mevalonate + ATP = (R)-5-phosphomevalonate + ADP + H(+). Its pathway is isoprenoid biosynthesis; isopentenyl diphosphate biosynthesis via mevalonate pathway; isopentenyl diphosphate from (R)-mevalonate: step 1/3. Its activity is regulated as follows. Farnesyl pyrophosphate and geranyl pyrophosphate inhibit mevalonate kinase activity by binding competitively at the ATP-binding sites. In terms of biological role, catalyzes the phosphorylation of mevalonate to mevalonate 5-phosphate, a key step in isoprenoid and cholesterol biosynthesis. In Homo sapiens (Human), this protein is Mevalonate kinase.